The sequence spans 124 residues: Large ribosomal subunit protein bL21 (124 aa).

The interval 105 to 124 (NAPSIGPRVRKAKPAAEAAE) is disordered.

It belongs to the bacterial ribosomal protein bL21 family. Part of the 50S ribosomal subunit. Contacts protein L20.

This protein binds to 23S rRNA in the presence of protein L20. This is Large ribosomal subunit protein bL21 from Rhodopseudomonas palustris (strain BisA53).